A 257-amino-acid chain; its full sequence is Acyl-[acyl-carrier-protein]--UDP-N-acetylglucosamine O-acyltransferase (257 aa).

Belongs to the transferase hexapeptide repeat family. LpxA subfamily. Homotrimer.

It is found in the cytoplasm. The catalysed reaction is a (3R)-hydroxyacyl-[ACP] + UDP-N-acetyl-alpha-D-glucosamine = a UDP-3-O-[(3R)-3-hydroxyacyl]-N-acetyl-alpha-D-glucosamine + holo-[ACP]. Its pathway is glycolipid biosynthesis; lipid IV(A) biosynthesis; lipid IV(A) from (3R)-3-hydroxytetradecanoyl-[acyl-carrier-protein] and UDP-N-acetyl-alpha-D-glucosamine: step 1/6. Its function is as follows. Involved in the biosynthesis of lipid A, a phosphorylated glycolipid that anchors the lipopolysaccharide to the outer membrane of the cell. The polypeptide is Acyl-[acyl-carrier-protein]--UDP-N-acetylglucosamine O-acyltransferase (Anaeromyxobacter sp. (strain K)).